The sequence spans 404 residues: uncharacterized protein (404 aa).

Transmembrane regions (helical) follow at residues 3–23 (IIAK…PITE), 43–63 (TTQI…LTLG), 73–93 (PVVL…IFAP), 95–115 (IETL…GSVI), 135–155 (SLSP…GYII), 162–182 (YTFV…CKIL), 216–236 (IIGA…FIFI), 248–268 (KLAF…GYLI), 280–300 (ILGL…ALIL), 309–329 (IAVI…NLLI), 346–366 (TAGS…TFLV), and 377–397 (FALL…YILI).

Belongs to the major facilitator superfamily. Bcr/CmlA family.

The protein localises to the cell inner membrane. This is an uncharacterized protein from Rickettsia bellii (strain RML369-C).